The following is a 284-amino-acid chain: NAD(P)H-hydrate epimerase (284 aa).

The transit peptide at 1–55 directs the protein to the mitochondrion; that stretch reads MSGLRTLLGLGLLVSSSRFPRVVARGGPRCPGPAWWAARPMHLGDSTMAGGTVKY. Positions 61–271 constitute a YjeF N-terminal domain; that stretch reads AQAVDEELFN…DLEKKYQLNL (211 aa). A (6S)-NADPHX-binding site is contributed by 115–119; that stretch reads NNGGD. Residue asparagine 116 participates in K(+) binding. Residue lysine 140 is modified to N6-succinyllysine. Aspartate 181 is a binding site for K(+). (6S)-NADPHX is bound by residues 185–191 and aspartate 214; that span reads GFSFKGA. Residue serine 217 participates in K(+) binding.

It belongs to the NnrE/AIBP family. Homodimer. Interacts with APOA1 and APOA2. Requires K(+) as cofactor. Post-translationally, undergoes physiological phosphorylation during sperm capacitation, downstream to PKA activation.

The protein resides in the mitochondrion. The protein localises to the secreted. The catalysed reaction is (6R)-NADHX = (6S)-NADHX. The enzyme catalyses (6R)-NADPHX = (6S)-NADPHX. In terms of biological role, catalyzes the epimerization of the S- and R-forms of NAD(P)HX, a damaged form of NAD(P)H that is a result of enzymatic or heat-dependent hydration. This is a prerequisite for the S-specific NAD(P)H-hydrate dehydratase to allow the repair of both epimers of NAD(P)HX. Accelerates cholesterol efflux from endothelial cells to high-density lipoprotein (HDL) and thereby regulates angiogenesis. The protein is NAD(P)H-hydrate epimerase of Monodelphis domestica (Gray short-tailed opossum).